The sequence spans 792 residues: Pentatricopeptide repeat-containing protein At4g30700 (792 aa).

PPR repeat units follow at residues 51-81 (DISLLTKLTQRLSDLGAIYYARDIFLSVQRP), 82-117 (DVFLFNVLMRGFSVNESPHSSLSVFAHLRKSTDLKP), 118-152 (NSSTYAFAISAASGFRDDRAGRVIHGQAVVDGCDS), 153-183 (ELLLGSNIVKMYFKFWRVEDARKVFDRMPEK), 184-218 (DTILWNTMISGYRKNEMYVESIQVFRDLINESCTR), 220-254 (DTTTLLDILPAVAELQELRLGMQIHSLATKTGCYS), 255-285 (HDYVLTGFISLYSKCGKIKMGSALFREFRKP), 286-320 (DIVAYNAMIHGYTSNGETELSLSLFKELMLSGARL), 321-352 (RSSTLVSLVPVSGHLMLIYAIHGYCLKSNFLS), 353-383 (HASVSTALTTVYSKLNEIESARKLFDESPEK), 384-418 (SLPSWNAMISGYTQNGLTEDAISLFREMQKSEFSP), 419-453 (NPVTITCILSACAQLGALSLGKWVHDLVRSTDFES), 454-484 (SIYVSTALIGMYAKCGSIAEARRLFDLMTKK), 485-519 (NEVTWNTMISGYGLHGQGQEALNIFYEMLNSGITP), 520-555 (TPVTFLCVLYACSHAGLVKEGDEIFNSMIHRYGFEP), and 556-586 (SVKHYACMVDILGRAGHLQRALQFIEAMSIE). The tract at residues 591-666 (VWETLLGACR…APGYTLIEIG (76 aa)) is type E motif. The type E(+) motif stretch occupies residues 667–697 (ETPHVFTSGDQSHPQVKEIYEKLEKLEGKMR). The segment at 698-792 (EAGYQPETEL…DGVCSCGDYW (95 aa)) is type DYW motif.

The protein belongs to the PPR family. PCMP-H subfamily.

This chain is Pentatricopeptide repeat-containing protein At4g30700 (DYW9), found in Arabidopsis thaliana (Mouse-ear cress).